Here is a 151-residue protein sequence, read N- to C-terminus: Large ribosomal subunit protein uL13 (151 aa).

The protein belongs to the universal ribosomal protein uL13 family. As to quaternary structure, part of the 50S ribosomal subunit.

Functionally, this protein is one of the early assembly proteins of the 50S ribosomal subunit, although it is not seen to bind rRNA by itself. It is important during the early stages of 50S assembly. In Microcystis aeruginosa (strain NIES-843 / IAM M-2473), this protein is Large ribosomal subunit protein uL13.